A 333-amino-acid chain; its full sequence is Ribosomal protein L11 methyltransferase (333 aa).

Thr-181, Gly-202, Asp-224, and Asn-268 together coordinate S-adenosyl-L-methionine.

This sequence belongs to the methyltransferase superfamily. PrmA family.

The protein resides in the cytoplasm. The enzyme catalyses L-lysyl-[protein] + 3 S-adenosyl-L-methionine = N(6),N(6),N(6)-trimethyl-L-lysyl-[protein] + 3 S-adenosyl-L-homocysteine + 3 H(+). Its function is as follows. Methylates ribosomal protein L11. This Helicobacter pylori (strain ATCC 700392 / 26695) (Campylobacter pylori) protein is Ribosomal protein L11 methyltransferase.